Here is a 135-residue protein sequence, read N- to C-terminus: UPF0201 protein TON_1346 (135 aa).

This sequence belongs to the UPF0201 family.

This chain is UPF0201 protein TON_1346, found in Thermococcus onnurineus (strain NA1).